Reading from the N-terminus, the 227-residue chain is PKHD-type hydroxylase GOX0559 (227 aa).

The 101-residue stretch at 78 to 178 folds into the Fe2OG dioxygenase domain; it reads RVYPPLFNRY…RWASFFWSQS (101 aa). Positions 96, 98, and 159 each coordinate Fe cation. Arg169 is a 2-oxoglutarate binding site.

The cofactor is Fe(2+). Requires L-ascorbate as cofactor.

This chain is PKHD-type hydroxylase GOX0559, found in Gluconobacter oxydans (strain 621H) (Gluconobacter suboxydans).